The chain runs to 293 residues: Probable adenylate kinase 1, chloroplastic (293 aa).

The N-terminal 26 residues, 1 to 26 (MAAVQRLLRASASGGAAAAAAAARRR), are a transit peptide targeting the mitochondrion. 70-75 (GVGKGT) contacts ATP. Positions 90-119 (ATGDLVRDELASSGPLSVQLAEIVNQGKLV) are NMP. AMP-binding positions include Thr-91, Arg-96, 117–119 (KLV), 147–150 (GFPR), and Gln-154. An LID region spans residues 183–231 (GRRICGQCGKNFNLACIDVKGENGLPPIYMAPLLPPNNCMSKLITRADD). ATP is bound by residues Arg-184 and 193-194 (NF). 2 residues coordinate AMP: Arg-228 and Arg-239.

The protein belongs to the adenylate kinase family.

The protein resides in the mitochondrion. The catalysed reaction is AMP + ATP = 2 ADP. Its function is as follows. Catalyzes the reversible transfer of the terminal phosphate group between ATP and AMP. Plays an important role in cellular energy homeostasis and in adenine nucleotide metabolism. The polypeptide is Probable adenylate kinase 1, chloroplastic (Oryza sativa subsp. japonica (Rice)).